The primary structure comprises 215 residues: HTH-type transcriptional repressor FabR (215 aa).

Positions Lys10–Leu70 constitute an HTH tetR-type domain. Positions Ser33–Phe52 form a DNA-binding region, H-T-H motif.

In terms of assembly, homodimer.

Its subcellular location is the cytoplasm. In terms of biological role, represses the transcription of fabB, involved in unsaturated fatty acid (UFA) biosynthesis. By controlling UFA production, FabR directly influences the physical properties of the membrane bilayer. The chain is HTH-type transcriptional repressor FabR from Escherichia coli O9:H4 (strain HS).